We begin with the raw amino-acid sequence, 226 residues long: Neuron-specific vesicular protein calcyon (226 aa).

The interval 1–21 (MVKLGCSFSGKPGKEAGDQDG) is disordered. Residues 1 to 88 (MVKLGCSFSG…EEGRRLPTAR (88 aa)) are Extracellular-facing. The helical transmembrane segment at 89-109 (MIAFAMALLGCVLIMYKAIWY) threads the bilayer. The Cytoplasmic segment spans residues 110–226 (DQFTCPDGFL…AEGVPSQPPK (117 aa)). The tract at residues 177–226 (HKGTTPAAMAVSTAAAAAAAEGTEPSGKSLDTREKEDPQKAEGVPSQPPK) is disordered. Low complexity predominate over residues 183-196 (AAMAVSTAAAAAAA). The span at 206 to 216 (LDTREKEDPQK) shows a compositional bias: basic and acidic residues.

This sequence belongs to the NSG family. In terms of assembly, interacts with CLTA. As to expression, most abundant in brain. Also expressed in testis and ovary and, at much lower levels, in kidney and heart.

The protein localises to the cytoplasmic vesicle membrane. Its subcellular location is the cell membrane. Interacts with clathrin light chain A and stimulates clathrin self-assembly and clathrin-mediated endocytosis. This Mus musculus (Mouse) protein is Neuron-specific vesicular protein calcyon (Caly).